The primary structure comprises 106 residues: Iron-sulfur cluster assembly protein CyaY (106 aa).

It belongs to the frataxin family.

In terms of biological role, involved in iron-sulfur (Fe-S) cluster assembly. May act as a regulator of Fe-S biogenesis. This is Iron-sulfur cluster assembly protein CyaY from Salmonella typhimurium (strain LT2 / SGSC1412 / ATCC 700720).